The sequence spans 393 residues: Bifunctional enzyme Fae/Hps (393 aa).

The segment at 1-161 (MYLIGEALVG…HEKDRAAHAV (161 aa)) is formaldehyde-activating enzyme. Residue H17 is the Proton donor of the active site. 5 residues coordinate substrate: D19, L48, K66, T68, and Q83. A 3-hexulose-6-phosphate synthase region spans residues 162-393 (MGFKVQRLWD…IDQFRIMTDF (232 aa)).

The protein in the N-terminal section; belongs to the formaldehyde-activating enzyme family. It in the C-terminal section; belongs to the HPS/KGPDC family. HPS subfamily.

It carries out the reaction 5,6,7,8-tetrahydromethanopterin + formaldehyde = 5,10-methylenetetrahydromethanopterin + H2O. It catalyses the reaction D-ribulose 5-phosphate + formaldehyde = D-arabino-hex-3-ulose 6-phosphate. It functions in the pathway carbohydrate biosynthesis; D-ribose 5-phosphate biosynthesis. Functionally, catalyzes the condensation of formaldehyde with tetrahydromethanopterin (H(4)MPT) to 5,10-methylenetetrahydromethanopterin. Its function is as follows. Catalyzes the reversible formation of ribulose-5-phosphate and formaldehyde from 3-hexulose-6-phosphate. This chain is Bifunctional enzyme Fae/Hps, found in Methanoculleus marisnigri (strain ATCC 35101 / DSM 1498 / JR1).